Reading from the N-terminus, the 974-residue chain is Exocyst complex component 4 (974 aa).

A2 bears the N-acetylalanine mark. An N6-acetyllysine modification is found at K9. Phosphoserine occurs at positions 32 and 226. Residues 32–114 adopt a coiled-coil conformation; the sequence is STSDDVEDRE…HCKRDELRKL (83 aa). A phosphothreonine mark is found at T233 and T237. S468 carries the post-translational modification Phosphoserine.

Belongs to the SEC8 family. In terms of assembly, the exocyst complex is composed of EXOC1, EXOC2, EXOC3, EXOC4, EXOC5, EXOC6, EXOC7 and EXOC8. Interacts with BIRC6/bruce. Interacts with MYRIP. Interacts with SH3BP1; required for the localization of both SH3BP1 and the exocyst to the leading edge of migrating cells. Interacts with SLC6A9.

It is found in the midbody. The protein resides in the midbody ring. Its subcellular location is the cell projection. It localises to the cytoplasm. The protein localises to the cytoskeleton. It is found in the microtubule organizing center. The protein resides in the centrosome. In terms of biological role, component of the exocyst complex involved in the docking of exocytic vesicles with fusion sites on the plasma membrane. This chain is Exocyst complex component 4 (EXOC4), found in Homo sapiens (Human).